Consider the following 295-residue polypeptide: MADSVDRVFVHALNTVKKIPKTGASRPPPTDRLRLYGLYKQAMEGDVDGVMERPTAASGLASDELQREKDKWDAWNLQKGLSRTESKRRYIEALIDTMHRYATTPDAEELVSELEFVWNQIKDNSPSSSLSSPRPNQSTGAGAQQPQQEPEQASDGEGPLKELRPMSEYDEAELRSQRQVDLEDDEVDVPTSDRSSGRWQRKVERALTTMSAEVAALREQIMTGREWRTKKERSVPAWVKWFAWLLVKHIFADLVILSVVLLWLRKRKDQRLEDIVRAGVRLMREYVRNVLPSRG.

The ACB domain maps to 5 to 103 (VDRVFVHALN…LIDTMHRYAT (99 aa)). Disordered stretches follow at residues 124 to 162 (NSPS…PLKE) and 174 to 201 (LRSQ…RWQR). A compositionally biased stretch (low complexity) spans 125–153 (SPSSSLSSPRPNQSTGAGAQQPQQEPEQA). Residue asparagine 136 is glycosylated (N-linked (GlcNAc...) asparagine). A helical transmembrane segment spans residues 244–264 (WLLVKHIFADLVILSVVLLWL).

Belongs to the ATG37 family.

The protein resides in the peroxisome membrane. Its function is as follows. Acyl-CoA binding protein which acts as the peroxisome receptor for pexophagy. Required for both micropexophagy and macropexophagy, but not for the cytoplasm to vacuole transport (Cvt) or autophagy pathways. Required for functional micropexophagic apparatus (MIPA) and relocation of ATG11 to the peroxisome-sequestering arms of the vacuole. Binds palmitoyl-CoA but not oleyl-CoA. The chain is Autophagy-related protein 37 from Gibberella zeae (strain ATCC MYA-4620 / CBS 123657 / FGSC 9075 / NRRL 31084 / PH-1) (Wheat head blight fungus).